Here is a 428-residue protein sequence, read N- to C-terminus: Enolase (428 aa).

Gln163 contributes to the (2R)-2-phosphoglycerate binding site. Glu205 (proton donor) is an active-site residue. Residues Asp242, Glu285, and Asp312 each coordinate Mg(2+). 4 residues coordinate (2R)-2-phosphoglycerate: Lys337, Arg366, Ser367, and Lys388. The active-site Proton acceptor is Lys337.

Belongs to the enolase family. Mg(2+) is required as a cofactor.

It is found in the cytoplasm. Its subcellular location is the secreted. It localises to the cell surface. It catalyses the reaction (2R)-2-phosphoglycerate = phosphoenolpyruvate + H2O. It participates in carbohydrate degradation; glycolysis; pyruvate from D-glyceraldehyde 3-phosphate: step 4/5. In terms of biological role, catalyzes the reversible conversion of 2-phosphoglycerate (2-PG) into phosphoenolpyruvate (PEP). It is essential for the degradation of carbohydrates via glycolysis. This chain is Enolase, found in Polynucleobacter asymbioticus (strain DSM 18221 / CIP 109841 / QLW-P1DMWA-1) (Polynucleobacter necessarius subsp. asymbioticus).